A 360-amino-acid chain; its full sequence is Cyclin-dependent kinase 10 (360 aa).

The region spanning 39 to 323 is the Protein kinase domain; it reads FEKLNRIGEG…AGDCLESSYF (285 aa). Residues 45–53 and lysine 68 each bind ATP; that span reads IGEGTYGIV. The active-site Proton acceptor is the aspartate 163. Position 196 is a phosphothreonine (threonine 196). The disordered stretch occupies residues 334-360; it reads LMPTFPHHRNKRAAPATSEGQSKRCKP.

Belongs to the protein kinase superfamily. CMGC Ser/Thr protein kinase family. CDC2/CDKX subfamily. In terms of assembly, heterodimer with CCNQ, the interaction is required for kinase activity. Interacts with ETS2. Interacts with PRK2.

The protein resides in the cytoplasm. It localises to the cytoskeleton. It is found in the cilium basal body. It catalyses the reaction L-seryl-[protein] + ATP = O-phospho-L-seryl-[protein] + ADP + H(+). The catalysed reaction is L-threonyl-[protein] + ATP = O-phospho-L-threonyl-[protein] + ADP + H(+). In terms of biological role, cyclin-dependent kinase that phosphorylates the transcription factor ETS2 (in vitro) and positively controls its proteasomal degradation (in cells). Involved in the regulation of actin cytoskeleton organization through the phosphorylation of actin dynamics regulators such as PKN2. Is a negative regulator of ciliogenesis through phosphorylation of PKN2 and promotion of RhoA signaling. The polypeptide is Cyclin-dependent kinase 10 (CDK10) (Homo sapiens (Human)).